Reading from the N-terminus, the 93-residue chain is Alpha-defensin 15 (93 aa).

A signal peptide spans 1–19 (MKTLVLLSALVLLAFQVQA). The propeptide occupies 20–58 (DPIQNTDEETKTEEQPGEDDQAVSVSFGDPEGSSLQEES). The tract at residues 23–56 (QNTDEETKTEEQPGEDDQAVSVSFGDPEGSSLQE) is disordered. 3 disulfides stabilise this stretch: Cys64/Cys92, Cys66/Cys81, and Cys71/Cys91.

Belongs to the alpha-defensin family. As to expression, paneth cells of the small bowel.

It localises to the secreted. Functionally, probably contributes to the antimicrobial barrier function of the small bowel mucosa. This is Alpha-defensin 15 (Defa15) from Mus musculus (Mouse).